The sequence spans 331 residues: Glycerol-3-phosphate dehydrogenase [NAD(P)+] (331 aa).

Residues Ser11, Phe12, Arg32, and Lys106 each contribute to the NADPH site. Sn-glycerol 3-phosphate is bound by residues Lys106, Gly134, and Ser136. Residue Ala138 coordinates NADPH. Lys189, Asp242, Ser252, Arg253, and Asn254 together coordinate sn-glycerol 3-phosphate. Lys189 functions as the Proton acceptor in the catalytic mechanism. Arg253 is a binding site for NADPH. Residues Val277 and Glu279 each contribute to the NADPH site.

It belongs to the NAD-dependent glycerol-3-phosphate dehydrogenase family.

It localises to the cytoplasm. The catalysed reaction is sn-glycerol 3-phosphate + NAD(+) = dihydroxyacetone phosphate + NADH + H(+). It catalyses the reaction sn-glycerol 3-phosphate + NADP(+) = dihydroxyacetone phosphate + NADPH + H(+). Its pathway is membrane lipid metabolism; glycerophospholipid metabolism. Its function is as follows. Catalyzes the reduction of the glycolytic intermediate dihydroxyacetone phosphate (DHAP) to sn-glycerol 3-phosphate (G3P), the key precursor for phospholipid synthesis. The sequence is that of Glycerol-3-phosphate dehydrogenase [NAD(P)+] from Clostridium perfringens (strain ATCC 13124 / DSM 756 / JCM 1290 / NCIMB 6125 / NCTC 8237 / Type A).